Reading from the N-terminus, the 171-residue chain is Co-chaperone protein HscB (171 aa).

The J domain maps to 2 to 74 (DYFTLFGLPA…LARAEYLLSL (73 aa)).

Belongs to the HscB family. As to quaternary structure, interacts with HscA and stimulates its ATPase activity. Interacts with IscU.

In terms of biological role, co-chaperone involved in the maturation of iron-sulfur cluster-containing proteins. Seems to help targeting proteins to be folded toward HscA. The chain is Co-chaperone protein HscB from Enterobacter sp. (strain 638).